The primary structure comprises 139 residues: Trafficking protein particle complex subunit 2-like protein (139 aa).

The protein belongs to the TRAPP small subunits family. Sedlin subfamily. As to quaternary structure, component of the multisubunit TRAPP (transport protein particle) complex, which includes at least TRAPPC2, TRAPPC2L, TRAPPC3, TRAPPC3L, TRAPPC4, TRAPPC5, TRAPPC8, TRAPPC9, TRAPPC10, TRAPPC11 and TRAPPC12. Interacts with the heterodimer TRAPPC3-TRAPPC6A.

It localises to the cytoplasm. It is found in the perinuclear region. Its subcellular location is the endoplasmic reticulum. The protein resides in the golgi apparatus. Functionally, may play a role in vesicular transport from endoplasmic reticulum to Golgi. The sequence is that of Trafficking protein particle complex subunit 2-like protein (Trappc2l) from Mus musculus (Mouse).